Reading from the N-terminus, the 140-residue chain is Large ribosomal subunit protein bL19 (140 aa).

Over residues 113-126 (RIAERQDRTADGKI) the composition is skewed to basic and acidic residues. Residues 113 to 140 (RIAERQDRTADGKIKKGGKSAPAPTAAE) are disordered.

The protein belongs to the bacterial ribosomal protein bL19 family.

Functionally, this protein is located at the 30S-50S ribosomal subunit interface and may play a role in the structure and function of the aminoacyl-tRNA binding site. The protein is Large ribosomal subunit protein bL19 of Xanthobacter autotrophicus (strain ATCC BAA-1158 / Py2).